The primary structure comprises 194 residues: Mitochondrial inner membrane protease ATP23 (194 aa).

Residues 1–20 (MEDAAAPNSGSEFNPGARRG) are disordered. H96 is a Zn(2+) binding site. Residue E97 is part of the active site. H100 contributes to the Zn(2+) binding site.

Belongs to the peptidase M76 family.

It localises to the mitochondrion inner membrane. In terms of biological role, has a dual role in the assembly of mitochondrial ATPase. Acts as a protease that removes the N-terminal 10 residues of mitochondrial ATPase CF(0) subunit 6 (ATP6) at the intermembrane space side. Also involved in the correct assembly of the membrane-embedded ATPase CF(0) particle, probably mediating association of ATP6 with the subunit 9 ring. The polypeptide is Mitochondrial inner membrane protease ATP23 (Arabidopsis thaliana (Mouse-ear cress)).